The chain runs to 88 residues: uncharacterized protein (88 aa).

The signal sequence occupies residues 1–22 (MLKASILFITISLTLMLENSYG). 3 cysteine pairs are disulfide-bonded: C59–C73, C66–C77, and C72–C82.

Its subcellular location is the secreted. This is an uncharacterized protein from Schistosoma japonicum (Blood fluke).